Here is a 360-residue protein sequence, read N- to C-terminus: MDGSHCKVIAPLLTERHQRMVTKDGHSTLQMDGAQTGLAYLRDAWGILMDMRWRWMMLVFSASFVIHWLVFAVLWYILAEMNGDLGLDHDAPPENHTICVKYITSFTAAFSFSLETQLTIGYGTMFPSGDCPSAIALLAIQMLLGLMLEAFITGAFVAKIARPKNRAFSIRFTDLAVVAHIDGKPNLIFQVANTRPSPLTNVRVSAVLYQERENGKLYQTSVDFHLDGISSEECPFFIFPLTYYHSIIPSSPLATLLQHENPPHFELVVFLSAMQEGTGETCQRRTSYLPSEIMLHHCFASLLARGSKGEYQIKMENFDKTTPEFQTPLVSKSPNRTDLDIHINGQSIDNFQISETGLTE.

Topologically, residues Met1 to Asp50 are cytoplasmic. The chain crosses the membrane as a helical span at residues Met51–Ile77. At Leu78–Ser105 the chain is on the extracellular side. The segment at residues Phe106–Tyr122 is an intramembrane region (helical; Pore-forming). A Selectivity filter motif is present at residues Thr119 to Thr124. The Extracellular segment spans residues Gly123–Cys131. Residues Pro132–Val157 traverse the membrane as a helical segment. Residues Ala158 to Glu360 are Cytoplasmic-facing. Ser287 carries the post-translational modification Phosphoserine.

It belongs to the inward rectifier-type potassium channel (TC 1.A.2.1) family. As to quaternary structure, homotetramer. Interacts with RAB28; the interaction may facilitate cone outer segments phagocytosis. In terms of processing, phosphorylation at Ser-287 by PKA increases them.

The protein localises to the membrane. It is found in the cell membrane. It carries out the reaction K(+)(in) = K(+)(out). With respect to regulation, inhibited by Ba(2+) and Cs(+), although sensitivity to those inhibitors is much lower than in other Kir channels. Functionally, inward rectifier potassium channels are characterized by a greater tendency to allow potassium to flow into the cell rather than out of it. Their voltage dependence is regulated by the concentration of extracellular potassium; as external potassium is raised, the voltage range of the channel opening shifts to more positive voltages. The inward rectification is mainly due to the blockage of outward current by internal magnesium. KCNJ13 has a very low single channel conductance, low sensitivity to block by external barium and cesium, and no dependence of its inward rectification properties on the internal blocking particle magnesium. In Bos taurus (Bovine), this protein is Inward rectifier potassium channel 13 (KCNJ13).